Here is a 408-residue protein sequence, read N- to C-terminus: Protein CNPPD1 (408 aa).

The helical transmembrane segment at 233–253 (CLLAVAYVSSVALAVASMAVI) threads the bilayer.

This sequence belongs to the CNPPD1 family.

The protein localises to the membrane. The sequence is that of Protein CNPPD1 (Cnppd1) from Rattus norvegicus (Rat).